Reading from the N-terminus, the 102-residue chain is ATP-dependent Clp protease adapter protein ClpS (102 aa).

Belongs to the ClpS family. As to quaternary structure, binds to the N-terminal domain of the chaperone ClpA.

Its function is as follows. Involved in the modulation of the specificity of the ClpAP-mediated ATP-dependent protein degradation. The polypeptide is ATP-dependent Clp protease adapter protein ClpS (Janthinobacterium sp. (strain Marseille) (Minibacterium massiliensis)).